The sequence spans 662 residues: Portal protein (662 aa).

Residues 1-26 (MHRASANSPLNSVSGSMMWRNQSSGR) are compositionally biased toward polar residues. A disordered region spans residues 1–35 (MHRASANSPLNSVSGSMMWRNQSSGRRPSKRLSDN).

Belongs to the herpesviridae portal protein family. In terms of assembly, homododecamerizes. Interacts with terminase subunits TRM1 and TRM3.

The protein resides in the virion. The protein localises to the host nucleus. In terms of biological role, forms a portal in the viral capsid through which viral DNA is translocated during DNA packaging. Assembles as a dodecamer at a single fivefold axe of the T=16 icosahedric capsid. Binds to the molecular motor that translocates the viral DNA, termed terminase. The polypeptide is Portal protein (U76) (Human herpesvirus 6B (strain Z29) (HHV-6 variant B)).